Reading from the N-terminus, the 158-residue chain is MAAPGPNKDNIRAGCKRCGYPGHLTFECRNFLRVDPRKDIVLDVSSTSTEESDEEEQEALSKEKIFGSHSKGSQEDSRKEKHKKKSKERSRGKAKKRSYSSSDEEEDEMSKKKKKRKSNKKKGKKEKREKERKHKKKQKKKDTESSSSDSSSESSDTD.

Disordered regions lie at residues 1-20 and 45-158; these read MAAP…RCGY and SSTS…SDTD. The CCHC-type zinc finger occupies 13 to 30; it reads AGCKRCGYPGHLTFECRN. Over residues 59–79 the composition is skewed to basic and acidic residues; that stretch reads ALSKEKIFGSHSKGSQEDSRK. Basic residues-rich tracts occupy residues 80-98 and 111-140; these read EKHK…KKRS and KKKK…KQKK. Low complexity predominate over residues 145–158; it reads SSSSDSSSESSDTD.

In terms of biological role, possible splicing regulator involved in the control of cellular survival. In Danio rerio (Zebrafish), this protein is Protein SREK1IP1 (srek1ip1).